A 91-amino-acid polypeptide reads, in one-letter code: LYR motif-containing protein 4 (91 aa).

Pantetheine 4'-phosphate-binding residues include R6 and K44. N6-succinyllysine is present on K47.

This sequence belongs to the complex I LYR family. As to quaternary structure, homodimer. Component of the mitochondrial core iron-sulfur cluster (ISC) complex composed of NFS1, LYRM4, NDUFAB1, ISCU, FXN, and FDX2; this complex is a heterohexamer containing two copies of each monomer. Component of the cyteine desulfurase complex composed of NFS1, LYRM4 and NDUFAB1; this complex contributes to the stability and cysteine desulfurase activity of NFS1. Interacts with FXN; this interaction is nickel-dependent. Interacts with the cytoplasmic form of NFS1; the complex increases the stability of NFS1. Forms a complex with the cytoplasmic form of NFS1; this complex increases the stability and cysteine desulfurase activity of NFS1. Interacts with NFS1.

Its subcellular location is the mitochondrion. It localises to the nucleus. Its pathway is cofactor biosynthesis; iron-sulfur cluster biosynthesis. Functionally, stabilizing factor, of the core iron-sulfur cluster (ISC) assembly complex, that regulates, in association with NDUFAB1, the stability and the cysteine desulfurase activity of NFS1 and participates in the [2Fe-2S] clusters assembly on the scaffolding protein ISCU. The core iron-sulfur cluster (ISC) assembly complex is involved in the de novo synthesis of a [2Fe-2S] cluster, the first step of the mitochondrial iron-sulfur protein biogenesis. This process is initiated by the cysteine desulfurase complex (NFS1:LYRM4:NDUFAB1) that produces persulfide which is delivered on the scaffold protein ISCU in a FXN-dependent manner. Then this complex is stabilized by FDX2 which provides reducing equivalents to accomplish the [2Fe-2S] cluster assembly. Finally, the [2Fe-2S] cluster is transferred from ISCU to chaperone proteins, including HSCB, HSPA9 and GLRX5. May also participates in the iron-sulfur protein biogenesis in the cytoplasm through its interaction with the cytoplasmic form of NFS1. The protein is LYR motif-containing protein 4 of Bos taurus (Bovine).